We begin with the raw amino-acid sequence, 390 residues long: Enoyl-[acyl-carrier-protein] reductase [NADH], chloroplastic (390 aa).

A chloroplast-targeting transit peptide spans 1–74 (MAATAASSLQ…CKRPFSFSTR (74 aa)). NADP(+)-binding residues include leucine 53 and asparagine 170. Serine 239 (proton donor) is an active-site residue. The NADP(+) site is built by lysine 282 and serine 314. Catalysis depends on lysine 282, which acts as the Lowers pKa of active site Tyr.

This sequence belongs to the short-chain dehydrogenases/reductases (SDR) family. FabI subfamily. Homotetramer. In terms of tissue distribution, expressed in flowers and siliques and at lower levels in roots and leaves (at protein level).

It is found in the plastid. The protein localises to the chloroplast. The catalysed reaction is a 2,3-saturated acyl-[ACP] + NAD(+) = a (2E)-enoyl-[ACP] + NADH + H(+). The protein operates within lipid metabolism; fatty acid biosynthesis. Inhibited by the phytotoxin cyperin and the synthetic antimicrobial compound triclosan. Its function is as follows. Catalyzes the NAD-dependent reduction of a carbon-carbon double bond in an enoyl moiety that is covalently linked to an acyl carrier protein (ACP). Catalyzes the last reduction step in the de novo synthesis cycle of fatty acids. Involved in the elongation cycle of fatty acids which are used in lipid metabolism. Required for normal plant growth. The protein is Enoyl-[acyl-carrier-protein] reductase [NADH], chloroplastic (MOD1) of Arabidopsis thaliana (Mouse-ear cress).